The sequence spans 319 residues: Ribosomal protein L11 methyltransferase (319 aa).

4 residues coordinate S-adenosyl-L-methionine: T165, G186, D208, and N251.

This sequence belongs to the methyltransferase superfamily. PrmA family.

It localises to the cytoplasm. The catalysed reaction is L-lysyl-[protein] + 3 S-adenosyl-L-methionine = N(6),N(6),N(6)-trimethyl-L-lysyl-[protein] + 3 S-adenosyl-L-homocysteine + 3 H(+). In terms of biological role, methylates ribosomal protein L11. This chain is Ribosomal protein L11 methyltransferase, found in Limosilactobacillus reuteri subsp. reuteri (strain JCM 1112) (Lactobacillus reuteri).